The chain runs to 234 residues: Orotate phosphoribosyltransferase (234 aa).

Lys37 contacts 5-phospho-alpha-D-ribose 1-diphosphate. 45 to 46 is an orotate binding site; that stretch reads FF. 5-phospho-alpha-D-ribose 1-diphosphate contacts are provided by residues 83–84, Arg109, Lys110, Lys113, His115, and 134–142; these read YK and DDVISAGTS. Positions 138 and 166 each coordinate orotate.

This sequence belongs to the purine/pyrimidine phosphoribosyltransferase family. PyrE subfamily. In terms of assembly, homodimer. Mg(2+) is required as a cofactor.

It catalyses the reaction orotidine 5'-phosphate + diphosphate = orotate + 5-phospho-alpha-D-ribose 1-diphosphate. It participates in pyrimidine metabolism; UMP biosynthesis via de novo pathway; UMP from orotate: step 1/2. Functionally, catalyzes the transfer of a ribosyl phosphate group from 5-phosphoribose 1-diphosphate to orotate, leading to the formation of orotidine monophosphate (OMP). The polypeptide is Orotate phosphoribosyltransferase (Methylibium petroleiphilum (strain ATCC BAA-1232 / LMG 22953 / PM1)).